Reading from the N-terminus, the 349-residue chain is Ferredoxin--NADP reductase (349 aa).

Positions 43, 51, 56, 96, 131, 295, and 336 each coordinate FAD.

The protein belongs to the ferredoxin--NADP reductase type 2 family. In terms of assembly, homodimer. FAD is required as a cofactor.

It carries out the reaction 2 reduced [2Fe-2S]-[ferredoxin] + NADP(+) + H(+) = 2 oxidized [2Fe-2S]-[ferredoxin] + NADPH. This chain is Ferredoxin--NADP reductase, found in Paraburkholderia phytofirmans (strain DSM 17436 / LMG 22146 / PsJN) (Burkholderia phytofirmans).